We begin with the raw amino-acid sequence, 252 residues long: Phosphomannomutase (252 aa).

The Nucleophile role is filled by Asp-13. Positions 13 and 15 each coordinate Mg(2+). Asp-15 serves as the catalytic Proton donor/acceptor. Alpha-D-mannose 1-phosphate-binding residues include Arg-22, Arg-124, Arg-135, Arg-142, Ser-180, and Asp-182. Residues Asp-208, Tyr-220, and Thr-225 each contribute to the Mg(2+) site.

This sequence belongs to the eukaryotic PMM family. In terms of assembly, homodimer. Mg(2+) is required as a cofactor. Expressed in roots, stems, leaves, flowers and immature fruits.

It localises to the cytoplasm. It carries out the reaction alpha-D-mannose 1-phosphate = D-mannose 6-phosphate. The protein operates within nucleotide-sugar biosynthesis; GDP-alpha-D-mannose biosynthesis; alpha-D-mannose 1-phosphate from D-fructose 6-phosphate: step 2/2. Catalyzes the interconversion of mannose-6-phosphate to mannose-1-phosphate, the precursor for the synthesis of GDP-mannose. GDP-mannose is an essential sugar nucleotide for the synthesis of D-mannose-containing cell wall polysaccharides (galactomannans and glucomannans), glycolipids, glycoproteins and the antioxidant L-ascorbate. Can complement the yeast temperature-sensitive mutant sec53-6. The chain is Phosphomannomutase from Nicotiana benthamiana.